Consider the following 170-residue polypeptide: Protein SprT (170 aa).

The 142-residue stretch at 23–164 (QLARQHFSVE…CRQCGDKLKF (142 aa)) folds into the SprT-like domain. A Zn(2+)-binding site is contributed by H78. Residue E79 is part of the active site. H82 is a binding site for Zn(2+).

Belongs to the SprT family. The cofactor is Zn(2+).

The protein resides in the cytoplasm. In Serratia proteamaculans (strain 568), this protein is Protein SprT.